The following is a 181-amino-acid chain: Inner membrane-spanning protein YciB (181 aa).

Helical transmembrane passes span 3-23, 49-69, 76-96, 119-139, and 149-169; these read FLFDLFPVILFFITFKIYGIY, TMLWVSLVLIVVFGSATLILQ, WKPSVLYWLFAAALLIAQAIF, VNASWAAFFAFMGAANLYVAF, and FKLFGFMGLMLVFVVLQGLML.

The protein belongs to the YciB family.

The protein localises to the cell inner membrane. In terms of biological role, plays a role in cell envelope biogenesis, maintenance of cell envelope integrity and membrane homeostasis. In Nitrosospira multiformis (strain ATCC 25196 / NCIMB 11849 / C 71), this protein is Inner membrane-spanning protein YciB.